The following is a 588-amino-acid chain: Adenine deaminase (588 aa).

The protein belongs to the metallo-dependent hydrolases superfamily. Adenine deaminase family. As to quaternary structure, homodimer. Mn(2+) serves as cofactor.

It catalyses the reaction adenine + H2O + H(+) = hypoxanthine + NH4(+). The chain is Adenine deaminase from Escherichia coli O7:K1 (strain IAI39 / ExPEC).